A 520-amino-acid polypeptide reads, in one-letter code: Succinyl-CoA:3-ketoacid coenzyme A transferase 2A, mitochondrial (520 aa).

The N-terminal 39 residues, 1–39, are a transit peptide targeting the mitochondrion; the sequence is MAALRLLAWALPRGVSALRPPPALPHRLIRRYVSDRSGS. The disordered stretch occupies residues 280-299; that stretch reads ERLTTRDSKPAPGSKDNDPS. Catalysis depends on Glu-342, which acts as the 5-glutamyl coenzyme A thioester intermediate.

Belongs to the 3-oxoacid CoA-transferase family. Homodimer.

It is found in the mitochondrion. The catalysed reaction is a 3-oxo acid + succinyl-CoA = a 3-oxoacyl-CoA + succinate. It functions in the pathway ketone metabolism; succinyl-CoA degradation; acetoacetyl-CoA from succinyl-CoA: step 1/1. Its function is as follows. Key enzyme for ketone body catabolism. Transfers the CoA moiety from succinate to acetoacetate. Formation of the enzyme-CoA intermediate proceeds via an unstable anhydride species formed between the carboxylate groups of the enzyme and substrate. Probably play and important roles in the energy metabolism of spermatozoa. This is Succinyl-CoA:3-ketoacid coenzyme A transferase 2A, mitochondrial (Oxct2a) from Mus musculus (Mouse).